The primary structure comprises 184 residues: UPF0149 protein PputGB1_5261 (184 aa).

Belongs to the UPF0149 family.

The sequence is that of UPF0149 protein PputGB1_5261 from Pseudomonas putida (strain GB-1).